We begin with the raw amino-acid sequence, 1381 residues long: DNA-directed RNA polymerase subunit beta (1381 aa).

It belongs to the RNA polymerase beta chain family. The RNAP catalytic core consists of 2 alpha, 1 beta, 1 beta' and 1 omega subunit. When a sigma factor is associated with the core the holoenzyme is formed, which can initiate transcription.

It catalyses the reaction RNA(n) + a ribonucleoside 5'-triphosphate = RNA(n+1) + diphosphate. Its function is as follows. DNA-dependent RNA polymerase catalyzes the transcription of DNA into RNA using the four ribonucleoside triphosphates as substrates. This is DNA-directed RNA polymerase subunit beta from Sulfurimonas denitrificans (strain ATCC 33889 / DSM 1251) (Thiomicrospira denitrificans (strain ATCC 33889 / DSM 1251)).